The sequence spans 380 residues: Ubiquitin-like protein 7 (380 aa).

Positions 18 to 98 constitute a Ubiquitin-like domain; that stretch reads TPKSILRLPE…VLRKSWPEPD (81 aa). Residues 200–313 are disordered; sequence APMPGTDSSS…SSGVQSGTPI (114 aa). Over residues 206–221 the composition is skewed to low complexity; it reads DSSSRSMPSSSYRDMP. Serine 230 bears the Phosphoserine mark. Composition is skewed to low complexity over residues 240–253 and 270–293; these read TRSTPSSSTPSSRP and SELATALALASTPESSSHTPTPGT. Residues 294–313 are compositionally biased toward polar residues; the sequence is QGHSSGTSPMSSGVQSGTPI. A UBA domain is found at 333 to 377; it reads SLQSQWQPQLQQLRDMGIQDDELSLRALQATGGDIQAALELIFAG.

Binds ubiquitin. Interacts with MAVS; this interaction enhances TRIM21-dependent 'Lys-27'-linked polyubiquitination of MAVS. Deubiquitinated by OTUD4 which stabilizes UBL7 expression. As to expression, ubiquitous. Highly expressed in heart, skeletal muscle, testis, thyroid and adrenal gland.

Interferon-stimulated protein that positively regulates RNA virus-triggered innate immune signaling. Mechanistically, promotes 'Lys-27'-linked polyubiquitination of MAVS through TRIM21 leading to enhanced the IFN signaling pathway. The protein is Ubiquitin-like protein 7 (UBL7) of Homo sapiens (Human).